A 287-amino-acid chain; its full sequence is Small ribosomal subunit biogenesis GTPase RsgA (287 aa).

The region spanning 61–218 (SSELIRPTVA…LVDTPGFTTL (158 aa)) is the CP-type G domain. Residues 110-113 (NKED) and 161-169 (GPSGAGKST) contribute to the GTP site. Zn(2+) contacts are provided by Cys242, Cys247, His249, and Cys255.

This sequence belongs to the TRAFAC class YlqF/YawG GTPase family. RsgA subfamily. Monomer. Associates with 30S ribosomal subunit, binds 16S rRNA. The cofactor is Zn(2+).

Its subcellular location is the cytoplasm. In terms of biological role, one of several proteins that assist in the late maturation steps of the functional core of the 30S ribosomal subunit. Helps release RbfA from mature subunits. May play a role in the assembly of ribosomal proteins into the subunit. Circularly permuted GTPase that catalyzes slow GTP hydrolysis, GTPase activity is stimulated by the 30S ribosomal subunit. The chain is Small ribosomal subunit biogenesis GTPase RsgA from Clostridium perfringens (strain SM101 / Type A).